The primary structure comprises 465 residues: tRNA modification GTPase MnmE (465 aa).

3 residues coordinate (6S)-5-formyl-5,6,7,8-tetrahydrofolate: arginine 24, glutamate 84, and lysine 127. A TrmE-type G domain is found at 223–383; it reads GLNIVLAGQP…LRGELLRLIG (161 aa). Asparagine 233 contributes to the K(+) binding site. GTP contacts are provided by residues 233 to 238, 252 to 258, and 277 to 280; these read NVGKSS, TAIAGTT, and DTAG. Serine 237 serves as a coordination point for Mg(2+). K(+)-binding residues include threonine 252, isoleucine 254, and threonine 257. Threonine 258 is a binding site for Mg(2+). Residue lysine 465 coordinates (6S)-5-formyl-5,6,7,8-tetrahydrofolate.

The protein belongs to the TRAFAC class TrmE-Era-EngA-EngB-Septin-like GTPase superfamily. TrmE GTPase family. In terms of assembly, homodimer. Heterotetramer of two MnmE and two MnmG subunits. K(+) serves as cofactor.

The protein localises to the cytoplasm. Its function is as follows. Exhibits a very high intrinsic GTPase hydrolysis rate. Involved in the addition of a carboxymethylaminomethyl (cmnm) group at the wobble position (U34) of certain tRNAs, forming tRNA-cmnm(5)s(2)U34. This Janthinobacterium sp. (strain Marseille) (Minibacterium massiliensis) protein is tRNA modification GTPase MnmE.